We begin with the raw amino-acid sequence, 81 residues long: Small ribosomal subunit protein bS18 (81 aa).

Belongs to the bacterial ribosomal protein bS18 family. Part of the 30S ribosomal subunit. Forms a tight heterodimer with protein bS6.

Its function is as follows. Binds as a heterodimer with protein bS6 to the central domain of the 16S rRNA, where it helps stabilize the platform of the 30S subunit. The polypeptide is Small ribosomal subunit protein bS18 (Chloroflexus aurantiacus (strain ATCC 29366 / DSM 635 / J-10-fl)).